The sequence spans 796 residues: Ent-copalyl diphosphate synthase 4 (796 aa).

The transit peptide at 1 to 23 (MSSSSIVTSLLRPTTAADGVLPR) directs the protein to the chloroplast. Residue Lys240 coordinates substrate. 2 residues coordinate Mg(2+): Asp371 and Asp373. The short motif at 371–374 (DVDD) is the DXDD motif element. Position 457 (Lys457) interacts with substrate.

The protein belongs to the terpene synthase family. Tpsc subfamily. Requires Mg(2+) as cofactor. In terms of tissue distribution, highly expressed in leaves, and, at low levels, in stems, but barely in roots and flowers.

Its subcellular location is the plastid. It is found in the chloroplast. The catalysed reaction is (2E,6E,10E)-geranylgeranyl diphosphate = ent-copalyl diphosphate. Its pathway is secondary metabolite biosynthesis; terpenoid biosynthesis. Involved in the biosynthesis of ent-kaurene diterpenoids natural products such as oridonin, miltiradiene, eriocalyxin B and nezukol, known to exhibit antitumor, anti-inflammatory and antibacterial activities. Catalyzes the conversion of (2E,6E,10E)-geranylgeranyl diphosphate (GGPP) to ent-copalyl diphosphate (ent-CPP). The chain is Ent-copalyl diphosphate synthase 4 from Isodon rubescens (Rabdosia rubescens).